A 369-amino-acid chain; its full sequence is Protein-glutamate methylesterase/protein-glutamine glutaminase of group 3 operon (369 aa).

A Response regulatory domain is found at 11–128 (RVLIVDDSAA…DLERQEASIR (118 aa)). Position 62 is a 4-aspartylphosphate (Asp-62). Positions 136 to 168 (ATETTRRRSQPEPRPLAPGPKLTADEILPARPP) are disordered. The CheB-type methylesterase domain occupies 170-358 (PVPETMPVVC…LDRLAARIME (189 aa)). Active-site residues include Ser-183, His-209, and Asp-305.

It belongs to the CheB family. In terms of processing, phosphorylated in vitro by CheA2, but not by CheA1. Phosphorylation of the N-terminal regulatory domain activates the methylesterase activity.

The protein localises to the cytoplasm. It carries out the reaction [protein]-L-glutamate 5-O-methyl ester + H2O = L-glutamyl-[protein] + methanol + H(+). It catalyses the reaction L-glutaminyl-[protein] + H2O = L-glutamyl-[protein] + NH4(+). Functionally, involved in chemotaxis. Part of a chemotaxis signal transduction system that modulates chemotaxis in response to various stimuli. Catalyzes the demethylation of specific methylglutamate residues introduced into the chemoreceptors (methyl-accepting chemotaxis proteins or MCP) by CheR. Also mediates the irreversible deamidation of specific glutamine residues to glutamic acid. The protein is Protein-glutamate methylesterase/protein-glutamine glutaminase of group 3 operon (cheB3) of Cereibacter sphaeroides (Rhodobacter sphaeroides).